The primary structure comprises 252 residues: Phosphate import ATP-binding protein PstB (252 aa).

Residues 6–247 (ITIEKLNLYY…PKDERTEKYI (242 aa)) enclose the ABC transporter domain. 38–45 (GPSGCGKS) lines the ATP pocket.

Belongs to the ABC transporter superfamily. Phosphate importer (TC 3.A.1.7) family. In terms of assembly, the complex is composed of two ATP-binding proteins (PstB), two transmembrane proteins (PstC and PstA) and a solute-binding protein (PstS).

It is found in the cell membrane. It carries out the reaction phosphate(out) + ATP + H2O = ADP + 2 phosphate(in) + H(+). In terms of biological role, part of the ABC transporter complex PstSACB involved in phosphate import. Responsible for energy coupling to the transport system. The chain is Phosphate import ATP-binding protein PstB from Lactobacillus delbrueckii subsp. bulgaricus (strain ATCC 11842 / DSM 20081 / BCRC 10696 / JCM 1002 / NBRC 13953 / NCIMB 11778 / NCTC 12712 / WDCM 00102 / Lb 14).